A 286-amino-acid chain; its full sequence is Acetyl-coenzyme A carboxylase carboxyl transferase subunit beta (286 aa).

The CoA carboxyltransferase N-terminal domain maps to L26–V286. Zn(2+)-binding residues include C30, C33, C49, and C52. The C4-type zinc-finger motif lies at C30–C52.

Belongs to the AccD/PCCB family. In terms of assembly, acetyl-CoA carboxylase is a heterohexamer composed of biotin carboxyl carrier protein (AccB), biotin carboxylase (AccC) and two subunits each of ACCase subunit alpha (AccA) and ACCase subunit beta (AccD). Zn(2+) is required as a cofactor.

The protein localises to the cytoplasm. It carries out the reaction N(6)-carboxybiotinyl-L-lysyl-[protein] + acetyl-CoA = N(6)-biotinyl-L-lysyl-[protein] + malonyl-CoA. It participates in lipid metabolism; malonyl-CoA biosynthesis; malonyl-CoA from acetyl-CoA: step 1/1. Its function is as follows. Component of the acetyl coenzyme A carboxylase (ACC) complex. Biotin carboxylase (BC) catalyzes the carboxylation of biotin on its carrier protein (BCCP) and then the CO(2) group is transferred by the transcarboxylase to acetyl-CoA to form malonyl-CoA. The sequence is that of Acetyl-coenzyme A carboxylase carboxyl transferase subunit beta from Cellvibrio japonicus (strain Ueda107) (Pseudomonas fluorescens subsp. cellulosa).